The following is a 251-amino-acid chain: Probable transcriptional regulatory protein BLD_0450 (251 aa).

Belongs to the TACO1 family.

The protein resides in the cytoplasm. This is Probable transcriptional regulatory protein BLD_0450 from Bifidobacterium longum (strain DJO10A).